The chain runs to 169 residues: uncharacterized protein (169 aa).

3 helical membrane-spanning segments follow: residues 25–45 (ALMGLFEGGFVADLVLWMSYF), 57–77 (FFWVTLSLTQIITSIVAFGVF), and 91–111 (LFLIERIFTLVIGISAYFLMV).

Belongs to the major facilitator superfamily. Allantoate permease family.

It localises to the membrane. This is an uncharacterized protein from Saccharomyces cerevisiae (strain ATCC 204508 / S288c) (Baker's yeast).